The primary structure comprises 132 residues: Agouti-signaling protein (132 aa).

An N-terminal signal peptide occupies residues 1–22 (MDVTRLLLATLLVFLCFFTAYS). Residue asparagine 39 is glycosylated (N-linked (GlcNAc...) asparagine). The disordered stretch occupies residues 57–88 (KKSKQTSRKEAEKKRSSKKEASMKKVARPRTP). Residues 63-79 (SRKEAEKKRSSKKEASM) show a composition bias toward basic and acidic residues. 5 disulfide bridges follow: cysteine 93/cysteine 108, cysteine 100/cysteine 114, cysteine 107/cysteine 125, cysteine 111/cysteine 132, and cysteine 116/cysteine 123. In terms of domain architecture, Agouti spans 93–132 (CVATRDSCKPPAPACCDPCASCQCRFFRSACSCRVLSLNC).

It is found in the secreted. Its function is as follows. Involved in the regulation of melanogenesis. The binding of ASP to MC1R precludes alpha-MSH initiated signaling and thus blocks production of cAMP, leading to a down-regulation of eumelanogenesis (brown/black pigment) and thus increasing synthesis of pheomelanin (yellow/red pigment). The protein is Agouti-signaling protein (ASIP) of Macaca assamensis (Assam macaque).